Reading from the N-terminus, the 180-residue chain is Large ribosomal subunit protein uL5 (180 aa).

It belongs to the universal ribosomal protein uL5 family. As to quaternary structure, part of the 50S ribosomal subunit; part of the 5S rRNA/L5/L18/L25 subcomplex. Contacts the 5S rRNA and the P site tRNA. Forms a bridge to the 30S subunit in the 70S ribosome.

Functionally, this is one of the proteins that bind and probably mediate the attachment of the 5S RNA into the large ribosomal subunit, where it forms part of the central protuberance. In the 70S ribosome it contacts protein S13 of the 30S subunit (bridge B1b), connecting the 2 subunits; this bridge is implicated in subunit movement. Contacts the P site tRNA; the 5S rRNA and some of its associated proteins might help stabilize positioning of ribosome-bound tRNAs. In Synechocystis sp. (strain ATCC 27184 / PCC 6803 / Kazusa), this protein is Large ribosomal subunit protein uL5.